A 511-amino-acid polypeptide reads, in one-letter code: 2,3-bisphosphoglycerate-independent phosphoglycerate mutase (511 aa).

D14 and S64 together coordinate Mn(2+). The Phosphoserine intermediate role is filled by S64. Substrate-binding positions include H125, 155 to 156 (RD), R187, R193, 259 to 262 (RADR), and K333. Positions 400, 404, 441, 442, and 460 each coordinate Mn(2+).

This sequence belongs to the BPG-independent phosphoglycerate mutase family. In terms of assembly, monomer. The cofactor is Mn(2+).

It carries out the reaction (2R)-2-phosphoglycerate = (2R)-3-phosphoglycerate. It functions in the pathway carbohydrate degradation; glycolysis; pyruvate from D-glyceraldehyde 3-phosphate: step 3/5. Functionally, catalyzes the interconversion of 2-phosphoglycerate and 3-phosphoglycerate. The sequence is that of 2,3-bisphosphoglycerate-independent phosphoglycerate mutase from Pseudomonas putida (strain ATCC 47054 / DSM 6125 / CFBP 8728 / NCIMB 11950 / KT2440).